The following is a 93-amino-acid chain: Large ribosomal subunit protein uL23cy (93 aa).

It belongs to the universal ribosomal protein uL23 family. As to quaternary structure, part of the 50S ribosomal subunit.

It localises to the plastid. Its subcellular location is the chloroplast. Binds to 23S rRNA. In Sorghum bicolor (Sorghum), this protein is Large ribosomal subunit protein uL23cy (rpl23-B).